The sequence spans 468 residues: ATP synthase subunit beta (468 aa).

Gly155 to Thr162 serves as a coordination point for ATP.

The protein belongs to the ATPase alpha/beta chains family. As to quaternary structure, F-type ATPases have 2 components, CF(1) - the catalytic core - and CF(0) - the membrane proton channel. CF(1) has five subunits: alpha(3), beta(3), gamma(1), delta(1), epsilon(1). CF(0) has three main subunits: a(1), b(2) and c(9-12). The alpha and beta chains form an alternating ring which encloses part of the gamma chain. CF(1) is attached to CF(0) by a central stalk formed by the gamma and epsilon chains, while a peripheral stalk is formed by the delta and b chains.

Its subcellular location is the cell membrane. The catalysed reaction is ATP + H2O + 4 H(+)(in) = ADP + phosphate + 5 H(+)(out). In terms of biological role, produces ATP from ADP in the presence of a proton gradient across the membrane. The catalytic sites are hosted primarily by the beta subunits. In Streptococcus thermophilus (strain ATCC BAA-250 / LMG 18311), this protein is ATP synthase subunit beta.